The sequence spans 131 residues: Small ribosomal subunit protein eS17A (131 aa).

The protein belongs to the eukaryotic ribosomal protein eS17 family. In terms of assembly, component of the small ribosomal subunit (SSU). Mature yeast ribosomes consist of a small (40S) and a large (60S) subunit. The 40S small subunit contains 1 molecule of ribosomal RNA (18S rRNA) and at least 33 different proteins. The large 60S subunit contains 3 rRNA molecules (25S, 5.8S and 5S rRNA) and at least 46 different proteins.

The protein localises to the cytoplasm. Functionally, component of the ribosome, a large ribonucleoprotein complex responsible for the synthesis of proteins in the cell. The small ribosomal subunit (SSU) binds messenger RNAs (mRNAs) and translates the encoded message by selecting cognate aminoacyl-transfer RNA (tRNA) molecules. The large subunit (LSU) contains the ribosomal catalytic site termed the peptidyl transferase center (PTC), which catalyzes the formation of peptide bonds, thereby polymerizing the amino acids delivered by tRNAs into a polypeptide chain. The nascent polypeptides leave the ribosome through a tunnel in the LSU and interact with protein factors that function in enzymatic processing, targeting, and the membrane insertion of nascent chains at the exit of the ribosomal tunnel. This is Small ribosomal subunit protein eS17A (rps1701) from Schizosaccharomyces pombe (strain 972 / ATCC 24843) (Fission yeast).